A 412-amino-acid chain; its full sequence is Double C2-like domain-containing protein beta (412 aa).

A negatively regulates targeting to plasma membrane region spans residues 1-36; sequence MTLRRRGEKATISIQEHMAIDVCPGPIRPIKQISDY. The tract at residues 1 to 90 is mediates interaction with DYNLT1; sequence MTLRRRGEKA…EDVDQLFGAY (90 aa). Residues 38-123 form a disordered region; the sequence is PRFPRGLPPT…PDVDGYESDD (86 aa). Residues 43-58 show a composition bias toward pro residues; the sequence is GLPPTAAPRAPAPPDA. The segment covering 59–74 has biased composition (low complexity); sequence PARSPAASASPRSPSD. A compositionally biased stretch (pro residues) spans 95-108; the sequence is GPSPGPSPARPPAK. The segment covering 112–123 has biased composition (acidic residues); sequence DEPDVDGYESDD. C2 domains lie at 126–250 and 266–399; these read ALGT…SICL and ERGR…ERWH. Ca(2+) is bound by residues D157, D163, D218, D220, D297, D303, D357, D359, and D365. The interval 257–375 is mediates interaction with STXBP3; it reads DKAEDKSLEE…FIGGVVLGIN (119 aa). S411 carries the phosphoserine modification.

Interacts with cytoplasmic dynein light chain DYNLT1. May interact with UNC13A; the interaction mediates targeting to the plasma membrane. Probably interacts with the SNARE (soluble N-ethylmaleimide-sensitive factor attached protein receptor) complex composed of SNAP25, STX1A and VAMP2; the interaction is calcium-dependent and competitive with SYT1. Interacts with STX4; the interaction is calcium-dependent, increased by insulin and glucose, and mediates vesicle fusion with plasma membrane in pancreatic cells and adipocytes. Interacts with STXBP3; the interaction is direct, occurs at the cell membrane and regulates glucose-stimulated insulin secretion. It depends on Ca(2+) as a cofactor. In terms of tissue distribution, widely expressed. Expressed in pancreatic islet cells (at protein level).

It localises to the cytoplasm. Its subcellular location is the cytoplasmic granule. It is found in the cell membrane. Calcium sensor which positively regulates SNARE-dependent fusion of vesicles with membranes. Binds phospholipids in a calcium-dependent manner and may act at the priming stage of fusion by modifying membrane curvature to stimulate fusion. Involved in calcium-triggered exocytosis in chromaffin cells and calcium-dependent spontaneous release of neurotransmitter in absence of action potentials in neuronal cells. Involved both in glucose-stimulated insulin secretion in pancreatic cells and insulin-dependent GLUT4 transport to the plasma membrane in adipocytes. The chain is Double C2-like domain-containing protein beta (Doc2b) from Mus musculus (Mouse).